The following is a 242-amino-acid chain: uncharacterized protein (242 aa).

Belongs to the IIV-6 415R family.

This is an uncharacterized protein from Invertebrate iridescent virus 6 (IIV-6).